The chain runs to 178 residues: Dual-action ribosomal maturation protein DarP (178 aa).

Polar residues predominate over residues 1–14 (MTVSDHPQTVSQPD). Residues 1–25 (MTVSDHPQTVSQPDPESESRPSKTR) form a disordered region.

It belongs to the DarP family.

The protein localises to the cytoplasm. Member of a network of 50S ribosomal subunit biogenesis factors which assembles along the 30S-50S interface, preventing incorrect 23S rRNA structures from forming. Promotes peptidyl transferase center (PTC) maturation. This chain is Dual-action ribosomal maturation protein DarP, found in Nitrosomonas europaea (strain ATCC 19718 / CIP 103999 / KCTC 2705 / NBRC 14298).